A 110-amino-acid chain; its full sequence is Flagellar hook-basal body complex protein FliE (110 aa).

Belongs to the FliE family.

The protein localises to the bacterial flagellum basal body. The protein is Flagellar hook-basal body complex protein FliE of Pseudomonas entomophila (strain L48).